The following is a 141-amino-acid chain: Hemoglobin subunit alpha (141 aa).

In terms of domain architecture, Globin spans 1-141 (VLSSADKNNV…VSTVLTSKYR (141 aa)). S3 bears the Phosphoserine mark. N6-succinyllysine occurs at positions 7 and 11. N6-acetyllysine; alternate is present on K16. An N6-succinyllysine; alternate modification is found at K16. Residue Y24 is modified to Phosphotyrosine. The residue at position 35 (S35) is a Phosphoserine. N6-succinyllysine is present on K40. S49 carries the phosphoserine modification. H58 contributes to the O2 binding site. H87 contributes to the heme b binding site. S102 carries the post-translational modification Phosphoserine. Phosphothreonine is present on T108. S124 carries the phosphoserine modification. T134 and T137 each carry phosphothreonine. S138 carries the phosphoserine modification.

Belongs to the globin family. In terms of assembly, heterotetramer of two alpha chains and two beta chains. In terms of tissue distribution, red blood cells.

Involved in oxygen transport from the lung to the various peripheral tissues. Functionally, hemopressin acts as an antagonist peptide of the cannabinoid receptor CNR1. Hemopressin-binding efficiently blocks cannabinoid receptor CNR1 and subsequent signaling. The chain is Hemoglobin subunit alpha (HBA) from Panthera pardus saxicolor (Northern Persian leopard).